We begin with the raw amino-acid sequence, 495 residues long: MLINFFSSIEVLFVIIKWILLLGYWWLITEVTIRILFKRRTVPSAMAWLLIIYVVPFIGAIIYLLLGELNLEKKRIKRSKIIWISALKKIKKLKNYKEIFTTKNSHIARSLFRLCKHRQGIGGVKSEKINILNDPDNVMQSVINDINLAKISIEMIFYIWHPGGWTNYVVEVLIKAANRGVKCRLILDSAGSKNFLKSIQVKIMRKSGIKIVEALNLNILQIFLRRMDLRQHRKMILIDNYIGYTGSMNMIDPKFFKKNRKIGEWIDIMIRMEGPVASAMRIIFSCDWEIETGENIFYAPYDTKKCNIIKKDNNYKTQVIPSGPGVSEGVIHQVLLTAIYSAKKILIMTTPYLVPSDDILHAICTASQRGVSVYIIIPKFIDSILVKWASRSFFSELLHAGVLIYQFEGGLLHTKSILVDDQLSLVGTVNLDMRSLWLNFEITLMVDNRNFGKKLKKIQTNYMSLSKVLHLKEWSKRPYWKRIIERFFYFFSPLL.

A run of 2 helical transmembrane segments spans residues Ile-9–Thr-29 and Met-46–Leu-66. 2 consecutive PLD phosphodiesterase domains span residues Met-227–Lys-254 and Glu-408–Ser-435. Residues His-232, Lys-234, Asp-239, His-413, Lys-415, and Asp-420 contribute to the active site.

It belongs to the phospholipase D family. Cardiolipin synthase subfamily. ClsA sub-subfamily.

Its subcellular location is the cell membrane. The enzyme catalyses 2 a 1,2-diacyl-sn-glycero-3-phospho-(1'-sn-glycerol) = a cardiolipin + glycerol. Its function is as follows. Catalyzes the reversible phosphatidyl group transfer from one phosphatidylglycerol molecule to another to form cardiolipin (CL) (diphosphatidylglycerol) and glycerol. This chain is Cardiolipin synthase A, found in Wigglesworthia glossinidia brevipalpis.